Consider the following 411-residue polypeptide: Tyrosine--tRNA ligase (411 aa).

Tyr34 is an L-tyrosine binding site. Positions 39–48 match the 'HIGH' region motif; sequence CTATSLHIGS. 2 residues coordinate L-tyrosine: Tyr171 and Gln175. Residues 231–235 carry the 'KMSKS' region motif; sequence KMGKT. Residue Lys234 coordinates ATP. Residues 345 to 411 form the S4 RNA-binding domain; that stretch reads ISAYELFHEA…GKKRHILVRV (67 aa).

Belongs to the class-I aminoacyl-tRNA synthetase family. TyrS type 1 subfamily. Homodimer.

Its subcellular location is the cytoplasm. It carries out the reaction tRNA(Tyr) + L-tyrosine + ATP = L-tyrosyl-tRNA(Tyr) + AMP + diphosphate + H(+). Functionally, catalyzes the attachment of tyrosine to tRNA(Tyr) in a two-step reaction: tyrosine is first activated by ATP to form Tyr-AMP and then transferred to the acceptor end of tRNA(Tyr). The chain is Tyrosine--tRNA ligase from Rickettsia africae (strain ESF-5).